A 714-amino-acid polypeptide reads, in one-letter code: Fatty acid oxidation complex subunit alpha (714 aa).

The enoyl-CoA hydratase stretch occupies residues 1–190; that stretch reads MEMASAFTLN…KLGLVDDVVP (190 aa). The segment at 306-714 is 3-hydroxyacyl-CoA dehydrogenase; the sequence is APLNSVGILG…FWKTTATDLQ (409 aa).

The protein in the N-terminal section; belongs to the enoyl-CoA hydratase/isomerase family. In the central section; belongs to the 3-hydroxyacyl-CoA dehydrogenase family. As to quaternary structure, heterotetramer of two alpha chains (FadJ) and two beta chains (FadI).

The protein localises to the cytoplasm. It catalyses the reaction a (3S)-3-hydroxyacyl-CoA = a (2E)-enoyl-CoA + H2O. The catalysed reaction is a 4-saturated-(3S)-3-hydroxyacyl-CoA = a (3E)-enoyl-CoA + H2O. It carries out the reaction a (3S)-3-hydroxyacyl-CoA + NAD(+) = a 3-oxoacyl-CoA + NADH + H(+). The enzyme catalyses (3S)-3-hydroxybutanoyl-CoA = (3R)-3-hydroxybutanoyl-CoA. It functions in the pathway lipid metabolism; fatty acid beta-oxidation. In terms of biological role, catalyzes the formation of a hydroxyacyl-CoA by addition of water on enoyl-CoA. Also exhibits 3-hydroxyacyl-CoA epimerase and 3-hydroxyacyl-CoA dehydrogenase activities. This is Fatty acid oxidation complex subunit alpha from Escherichia coli O17:K52:H18 (strain UMN026 / ExPEC).